A 438-amino-acid chain; its full sequence is Xylose isomerase (438 aa).

Active-site residues include His-100 and Asp-103. Mg(2+) is bound by residues Glu-231, Glu-267, His-270, Asp-295, Asp-306, Asp-308, and Asp-338.

Belongs to the xylose isomerase family. In terms of assembly, homotetramer. The cofactor is Mg(2+).

It is found in the cytoplasm. It catalyses the reaction alpha-D-xylose = alpha-D-xylulofuranose. The sequence is that of Xylose isomerase from Thermoanaerobacter sp. (strain X514).